The following is a 381-amino-acid chain: Dynactin subunit 2 (381 aa).

Residues 15-39 (DQPDVYETPDAPESETSDFYDEEPA) are disordered. The span at 24–39 (DAPESETSDFYDEEPA) shows a compositional bias: acidic residues. Coiled-coil stretches lie at residues 100 to 216 (QKCL…AVGA) and 350 to 381 (GVQE…EKVK).

Belongs to the dynactin subunit 2 family. As to quaternary structure, subunit of dynactin, a multiprotein complex associated with dynein.

It localises to the cytoplasm. The protein resides in the cytoskeleton. Its subcellular location is the membrane. Functionally, modulates cytoplasmic dynein binding to an organelle, and plays a role in prometaphase chromosome alignment and spindle organization during mitosis. This is Dynactin subunit 2 from Aedes aegypti (Yellowfever mosquito).